Here is a 1538-residue protein sequence, read N- to C-terminus: Arf-GAP with Rho-GAP domain, ANK repeat and PH domain-containing protein 3 (1538 aa).

The SAM domain occupies 4-68 (PQDLDIAVWL…LRLLRAGSAE (65 aa)). Disordered stretches follow at residues 72 to 97 (DSHL…PVPK), 125 to 149 (SRNS…SVPN), and 215 to 242 (ASDR…EDAG). The span at 82-97 (TPSPAPDAQPPKPVPK) shows a compositional bias: pro residues. Basic and acidic residues predominate over residues 216–241 (SDRRDGRGVCQERAEHRQDLETREDA). PH domains follow at residues 282–374 (VPLL…SCLK) and 389–478 (RPLR…EAVT). The Arf-GAP domain maps to 479–606 (ETLSDYEVAE…LFRKPHPRHP (128 aa)). PH domains lie at 671–785 (ATYR…FSPL) and 795–901 (LLRM…AGGG). Positions 903-1084 (TGLQEQQMSR…ELIDGYISVF (182 aa)) constitute a Rho-GAP domain. Positions 1113 to 1206 (GDLIMEVYIE…ASLLLRKVSM (94 aa)) constitute a Ras-associating domain. The PH 5 domain occupies 1219–1321 (ESPRVGLLRC…WTTSILKAQH (103 aa)). Position 1344 is a phosphothreonine (T1344). Residues Y1399 and Y1404 each carry the phosphotyrosine modification. Positions 1425 to 1439 (WSAKSDPSLTSQRSF) are enriched in polar residues. The disordered stretch occupies residues 1425–1538 (WSAKSDPSLT…SNPPSSQPLT (114 aa)). Phosphoserine occurs at positions 1438 and 1474. Composition is skewed to low complexity over residues 1476–1486 (EEQLLQELNNL) and 1494–1505 (ASCPESSSQPTS). A compositionally biased stretch (pro residues) spans 1506–1529 (PQAPSPTSLPTPTPSLPTQPPCTS).

In terms of assembly, interacts (via SAM domain) with INPPL1/SHIP2. In terms of processing, tyrosine phosphorylated at a low basal level. PDGF treatment stimulates phosphorylation. Tyrosine phosphorylation is increased in cells that are in the process of becoming attached to a substrate and that start spreading and flattening.

The protein localises to the cytoplasm. It localises to the cell membrane. Its subcellular location is the cytoskeleton. The protein resides in the cell projection. It is found in the lamellipodium. The protein localises to the ruffle. In terms of biological role, phosphatidylinositol 3,4,5-trisphosphate-dependent GTPase-activating protein that modulates actin cytoskeleton remodeling by regulating ARF and RHO family members. Is activated by phosphatidylinositol 3,4,5-trisphosphate (PtdIns(3,4,5)P3) binding. Can be activated by phosphatidylinositol 3,4-bisphosphate (PtdIns(3,4,5)P2) binding, albeit with lower efficiency. Acts preferentially on ARF5 and on RHOA. The polypeptide is Arf-GAP with Rho-GAP domain, ANK repeat and PH domain-containing protein 3 (Arap3) (Mus musculus (Mouse)).